Here is a 389-residue protein sequence, read N- to C-terminus: tRNA N(3)-cytidine methyltransferase METTL2 (389 aa).

The interval 1 to 20 (MAASFPEGVPETEDGKRPQF) is disordered. Tryptophan 78, tyrosine 82, glycine 181, aspartate 206, aspartate 232, leucine 233, and isoleucine 253 together coordinate S-adenosyl-L-methionine.

Belongs to the methyltransferase superfamily. METL family. As to quaternary structure, monomer. Interacts with DALRD3.

It localises to the cytoplasm. The enzyme catalyses cytidine(32) in tRNA(Thr) + S-adenosyl-L-methionine = N(3)-methylcytidine(32) in tRNA(Thr) + S-adenosyl-L-homocysteine + H(+). It catalyses the reaction cytidine(32) in tRNA(Arg)(CCU) + S-adenosyl-L-methionine = N(3)-methylcytidine(32) in tRNA(Arg)(CCU) + S-adenosyl-L-homocysteine + H(+). S-adenosyl-L-methionine-dependent methyltransferase that mediates N(3)-methylcytidine modification of residue 32 of the tRNA anticodon loop of tRNA(Thr)(UGU) and tRNA(Arg)(CCU). N(3)-methylcytidine methylation by METTL2 requires the N6-threonylcarbamoylation of tRNA (t6A37) by the EKC/KEOPS complex as prerequisite. The polypeptide is tRNA N(3)-cytidine methyltransferase METTL2 (Mus musculus (Mouse)).